Here is a 312-residue protein sequence, read N- to C-terminus: Putative HTH-type transcriptional regulatory protein Ta1363 (312 aa).

The region spanning 133–186 is the HTH cro/C1-type domain; sequence LREMRMKMSLSIGYLSHYLGVSRRSVSLYENGSSATIDVFLKLQEIIKSDLVDH. The segment at residues 144-163 is a DNA-binding region (H-T-H motif); sequence IGYLSHYLGVSRRSVSLYEN.

This Thermoplasma acidophilum (strain ATCC 25905 / DSM 1728 / JCM 9062 / NBRC 15155 / AMRC-C165) protein is Putative HTH-type transcriptional regulatory protein Ta1363.